Consider the following 314-residue polypeptide: 4-hydroxy-3-methylbut-2-enyl diphosphate reductase (314 aa).

Cysteine 12 is a [4Fe-4S] cluster binding site. Residues histidine 41 and histidine 74 each coordinate (2E)-4-hydroxy-3-methylbut-2-enyl diphosphate. Histidine 41 and histidine 74 together coordinate dimethylallyl diphosphate. Isopentenyl diphosphate contacts are provided by histidine 41 and histidine 74. Residue cysteine 96 coordinates [4Fe-4S] cluster. A (2E)-4-hydroxy-3-methylbut-2-enyl diphosphate-binding site is contributed by histidine 124. Histidine 124 serves as a coordination point for dimethylallyl diphosphate. Histidine 124 is an isopentenyl diphosphate binding site. Residue glutamate 126 is the Proton donor of the active site. (2E)-4-hydroxy-3-methylbut-2-enyl diphosphate is bound at residue threonine 167. Cysteine 197 contributes to the [4Fe-4S] cluster binding site. (2E)-4-hydroxy-3-methylbut-2-enyl diphosphate contacts are provided by serine 225, serine 226, asparagine 227, and serine 269. Dimethylallyl diphosphate contacts are provided by serine 225, serine 226, asparagine 227, and serine 269. Residues serine 225, serine 226, asparagine 227, and serine 269 each coordinate isopentenyl diphosphate.

It belongs to the IspH family. The cofactor is [4Fe-4S] cluster.

It catalyses the reaction isopentenyl diphosphate + 2 oxidized [2Fe-2S]-[ferredoxin] + H2O = (2E)-4-hydroxy-3-methylbut-2-enyl diphosphate + 2 reduced [2Fe-2S]-[ferredoxin] + 2 H(+). It carries out the reaction dimethylallyl diphosphate + 2 oxidized [2Fe-2S]-[ferredoxin] + H2O = (2E)-4-hydroxy-3-methylbut-2-enyl diphosphate + 2 reduced [2Fe-2S]-[ferredoxin] + 2 H(+). It functions in the pathway isoprenoid biosynthesis; dimethylallyl diphosphate biosynthesis; dimethylallyl diphosphate from (2E)-4-hydroxy-3-methylbutenyl diphosphate: step 1/1. The protein operates within isoprenoid biosynthesis; isopentenyl diphosphate biosynthesis via DXP pathway; isopentenyl diphosphate from 1-deoxy-D-xylulose 5-phosphate: step 6/6. Its function is as follows. Catalyzes the conversion of 1-hydroxy-2-methyl-2-(E)-butenyl 4-diphosphate (HMBPP) into a mixture of isopentenyl diphosphate (IPP) and dimethylallyl diphosphate (DMAPP). Acts in the terminal step of the DOXP/MEP pathway for isoprenoid precursor biosynthesis. This is 4-hydroxy-3-methylbut-2-enyl diphosphate reductase from Aliivibrio fischeri (strain MJ11) (Vibrio fischeri).